The primary structure comprises 352 residues: D-arabitol-phosphate dehydrogenase (352 aa).

Mn(2+)-binding residues include cysteine 43, histidine 65, cysteine 96, cysteine 99, cysteine 102, cysteine 110, and glutamate 151.

Belongs to the zinc-containing alcohol dehydrogenase family. As to quaternary structure, homotetramer. It depends on Mn(2+) as a cofactor.

The enzyme catalyses D-arabinitol 1-phosphate + NAD(+) = D-xylulose 5-phosphate + NADH + H(+). With respect to regulation, inhibited by EDTA, 4-hydroxymercuribenzoic acid (PHMB), mercury and zinc ions at a concentration of 2 mM. Involved in the arabitol catabolism via the arabitol phosphate route. Catalyzes only the transformation of D-arabitol 1-phosphate (Arb1P) and D-arabitol 5-phosphate (Arb5P) into D-xylulose 5-phosphate (Xlu5P) and ribulose 5-phosphate, respectively. It can use both NAD and NADP. In Enterococcus avium (Streptococcus avium), this protein is D-arabitol-phosphate dehydrogenase.